Here is a 137-residue protein sequence, read N- to C-terminus: Large ribosomal subunit protein eL28 (137 aa).

N-acetylserine is present on Ser-2. Glycyl lysine isopeptide (Lys-Gly) (interchain with G-Cter in SUMO2) cross-links involve residues Lys-58 and Lys-65. Residue Ser-115 is modified to Phosphoserine.

This sequence belongs to the eukaryotic ribosomal protein eL28 family. Component of the large ribosomal subunit.

It is found in the cytoplasm. Its function is as follows. Component of the large ribosomal subunit. The ribosome is a large ribonucleoprotein complex responsible for the synthesis of proteins in the cell. This Rattus norvegicus (Rat) protein is Large ribosomal subunit protein eL28 (Rpl28).